Here is a 1669-residue protein sequence, read N- to C-terminus: Dystrophin, isoform B (1669 aa).

The segment covering methionine 1 to proline 11 has biased composition (pro residues). 5 disordered regions span residues methionine 1 to glutamate 28, arginine 43 to alanine 243, arginine 327 to isoleucine 356, glycine 389 to serine 417, and serine 481 to glycine 508. Residues serine 53 to leucine 62 show a composition bias toward polar residues. The segment covering glycine 118 to arginine 131 has biased composition (pro residues). A compositionally biased stretch (low complexity) spans lysine 132–serine 147. Positions lysine 153–serine 166 are enriched in basic and acidic residues. Low complexity-rich tracts occupy residues alanine 328–glutamine 347 and serine 396–glycine 405. Residues serine 485 to threonine 500 show a composition bias toward basic and acidic residues. 4 Spectrin repeats span residues glutamine 541–histidine 643, glutamine 650–glutamate 747, asparagine 754–aspartate 883, and arginine 890–cysteine 990. Positions valine 827–arginine 851 are disordered. Residues alanine 994–lysine 1024 are disordered. Residues glutamine 1021 to methionine 1054 form the WW domain. A ZZ-type zinc finger spans residues lysine 1279 to threonine 1335. Residues cysteine 1284, cysteine 1287, cysteine 1299, cysteine 1302, cysteine 1308, cysteine 1311, histidine 1321, and histidine 1325 each contribute to the Zn(2+) site. Serine 1379 is subject to Phosphoserine. Disordered stretches follow at residues glutamate 1488–glycine 1516 and aspartate 1559–lysine 1669. 2 stretches are compositionally biased toward polar residues: residues asparagine 1497 to leucine 1509 and alanine 1580 to glycine 1611. Positions glutamine 1630–aspartate 1641 are enriched in acidic residues. A compositionally biased stretch (low complexity) spans serine 1642 to threonine 1660.

In terms of assembly, component of the dystrophin associated protein complex (DAPC). Interacts with Dg, via the Dg WW domain binding sites. As to expression, expressed in neuronally derived tissues, mainly the CNS and the brain of stage 16 embryos. Lower level expression is seen in the sensory organs. Expression is absent from the musculature. In larvae, expression is predominant throughout the neuropil and brain and in the eye antennal disks.

It localises to the cell membrane. The protein resides in the sarcolemma. The protein localises to the cytoplasm. Its subcellular location is the cytoskeleton. Required for the maintenance of appropriate synaptic retrograde communication and the stabilization of muscle cell architecture or physiology. May play a role in anchoring the cytoskeleton to the plasma membrane. This Drosophila melanogaster (Fruit fly) protein is Dystrophin, isoform B (Dys).